The following is a 246-amino-acid chain: Ubiquinone biosynthesis O-methyltransferase (246 aa).

4 residues coordinate S-adenosyl-L-methionine: R44, G63, D84, and M128.

Belongs to the methyltransferase superfamily. UbiG/COQ3 family.

The enzyme catalyses a 3-demethylubiquinol + S-adenosyl-L-methionine = a ubiquinol + S-adenosyl-L-homocysteine + H(+). It carries out the reaction a 3-(all-trans-polyprenyl)benzene-1,2-diol + S-adenosyl-L-methionine = a 2-methoxy-6-(all-trans-polyprenyl)phenol + S-adenosyl-L-homocysteine + H(+). The protein operates within cofactor biosynthesis; ubiquinone biosynthesis. In terms of biological role, O-methyltransferase that catalyzes the 2 O-methylation steps in the ubiquinone biosynthetic pathway. This Xylella fastidiosa (strain Temecula1 / ATCC 700964) protein is Ubiquinone biosynthesis O-methyltransferase.